A 699-amino-acid polypeptide reads, in one-letter code: Polyribonucleotide nucleotidyltransferase (699 aa).

Mg(2+)-binding residues include aspartate 485 and aspartate 491. The 60-residue stretch at 552 to 611 folds into the KH domain; that stretch reads PRITTIKINPEKIRDVIGKGGAVIRALTEETGTTIELEDDGTVKIASSNGDATREAIRRI. Positions 621–689 constitute an S1 motif domain; sequence GRIYNGKVIR…RQGRVRLSIK (69 aa).

This sequence belongs to the polyribonucleotide nucleotidyltransferase family. As to quaternary structure, component of the RNA degradosome, which is a multiprotein complex involved in RNA processing and mRNA degradation. Mg(2+) is required as a cofactor.

It localises to the cytoplasm. The enzyme catalyses RNA(n+1) + phosphate = RNA(n) + a ribonucleoside 5'-diphosphate. Its function is as follows. Involved in mRNA degradation. Catalyzes the phosphorolysis of single-stranded polyribonucleotides processively in the 3'- to 5'-direction. This is Polyribonucleotide nucleotidyltransferase from Shewanella sp. (strain ANA-3).